Consider the following 71-residue polypeptide: Putative RNA-binding regulatory peptide (71 aa).

As to quaternary structure, interacts with IGF2BP1 (via KH3 and KH4 domains); the interaction results in increased binding of IGF2BP1 to N6-methyladenosine (m6A)-containing mRNAs. As to expression, detected in colon (at protein level).

Functionally, enhances binding of IGF2BP1 to N6-methyladenosine (m6A)-containing mRNAs, thereby contributing to increased mRNA stability. Also increases the interaction of IGF2BP1 with RNA stabilizers ELAVL1/HUR, MATR3 and PABPC1, and increases the interaction of RNA stabilizers ELAVL1/HUR, MATR3 and PABPC1 with m6A-containing mRNAs. Contributes to MYC stability by enhancing binding of IGF2BP1 to m6A-containing MYC mRNAs and increasing recruitment of RNA stabilizing proteins to m6A-containing MYC mRNAs. The protein is Putative RNA-binding regulatory peptide of Homo sapiens (Human).